The chain runs to 813 residues: Calpain-7 (813 aa).

N-acetylmethionine is present on Met1. At Thr95 the chain carries Phosphothreonine. A Calpain catalytic domain is found at 232–540 (RERFAYPMPF…YDVVYLSWNP (309 aa)). Active-site residues include Cys290, His458, and Asn478. The interval 541–701 (ALFKESTCIH…INGKWSGQSA (161 aa)) is domain III. The segment at 702 to 813 (GGCGNFQETH…TVPIKTTQLQ (112 aa)) is domain N.

The protein belongs to the peptidase C2 family. As to expression, ubiquitous.

The protein resides in the nucleus. Its function is as follows. Calcium-regulated non-lysosomal thiol-protease. The sequence is that of Calpain-7 (Capn7) from Mus musculus (Mouse).